A 983-amino-acid chain; its full sequence is UPF0746 protein DDB_G0280809 (983 aa).

The segment covering 1-21 (MISNKRKEIDTINEHHEKNND) has biased composition (basic and acidic residues). Residues 1–26 (MISNKRKEIDTINEHHEKNNDDSDGI) are disordered. The SAP domain maps to 42-76 (SGSTNYRELQIIAKSLGLASNGKKQLVYNRIEGYF). Residues 391–413 (HTTPTSTSTSTSTSTSTYTSTST) form a disordered region. Low complexity predominate over residues 392-413 (TTPTSTSTSTSTSTSTYTSTST).

The protein belongs to the UPF0746 family.

The sequence is that of UPF0746 protein DDB_G0280809 from Dictyostelium discoideum (Social amoeba).